We begin with the raw amino-acid sequence, 281 residues long: Oxidoreductase-like protein SRL4 (281 aa).

Positions 39, 60, 67, 152, and 197 each coordinate NADP(+). Lys197 serves as the catalytic Lowers pKa of active site Tyr.

Belongs to the short-chain dehydrogenases/reductases (SDR) family.

Functionally, may be involved in the regulation of dNTP production. Induces the SOS system when expressed in E.coli, therefore, it may play a role in DNA metabolism and/or in genome stability. The polypeptide is Oxidoreductase-like protein SRL4 (SRL4) (Saccharomyces cerevisiae (strain ATCC 204508 / S288c) (Baker's yeast)).